The chain runs to 88 residues: UPF0297 protein GK2555 (88 aa).

This sequence belongs to the UPF0297 family.

The sequence is that of UPF0297 protein GK2555 from Geobacillus kaustophilus (strain HTA426).